The chain runs to 897 residues: Alanine--tRNA ligase (897 aa).

Zn(2+) is bound by residues His-581, His-585, Cys-684, and His-688.

This sequence belongs to the class-II aminoacyl-tRNA synthetase family. Zn(2+) serves as cofactor.

It localises to the cytoplasm. The enzyme catalyses tRNA(Ala) + L-alanine + ATP = L-alanyl-tRNA(Ala) + AMP + diphosphate. Catalyzes the attachment of alanine to tRNA(Ala) in a two-step reaction: alanine is first activated by ATP to form Ala-AMP and then transferred to the acceptor end of tRNA(Ala). Also edits incorrectly charged Ser-tRNA(Ala) and Gly-tRNA(Ala) via its editing domain. The chain is Alanine--tRNA ligase from Mycobacterium sp. (strain KMS).